The following is a 445-amino-acid chain: ATP synthase subunit b-delta (445 aa).

The ATP synthase subunit b stretch occupies residues 1–168 (MSIFIGQLIG…PSSVVIDTAA (168 aa)). The helical transmembrane segment at 3–23 (IFIGQLIGFAVIAFIIVKWVV) threads the bilayer. The tract at residues 169–445 (TSRLRAASRQ…LAAAQTGLPD (277 aa)) is ATP synthase subunit delta.

This sequence in the N-terminal section; belongs to the ATPase B chain family. In the C-terminal section; belongs to the ATPase delta chain family. In terms of assembly, F-type ATPases have 2 components, F(1) - the catalytic core - and F(0) - the membrane proton channel. F(1) has five subunits: alpha(3), beta(3), gamma(1), delta(1), epsilon(1). F(0) has three main subunits: a(1), b(2) and c(10-14). The alpha and beta chains form an alternating ring which encloses part of the gamma chain. F(1) is attached to F(0) by a central stalk formed by the gamma and epsilon chains, while a peripheral stalk is formed by the delta and b chains.

The protein resides in the cell membrane. In terms of biological role, f(1)F(0) ATP synthase produces ATP from ADP in the presence of a proton or sodium gradient. F-type ATPases consist of two structural domains, F(1) containing the extramembraneous catalytic core and F(0) containing the membrane proton channel, linked together by a central stalk and a peripheral stalk. During catalysis, ATP synthesis in the catalytic domain of F(1) is coupled via a rotary mechanism of the central stalk subunits to proton translocation. Its function is as follows. This fusion protein includes a component of the F(0) channel (subunit b) and of the F(1) subunit (subunit delta). Two copies of subunit b and one of delta together form the peripheral 'stator' stalk which links F(1) to F(0). This Mycolicibacterium smegmatis (strain ATCC 700084 / mc(2)155) (Mycobacterium smegmatis) protein is ATP synthase subunit b-delta (atpFH).